The primary structure comprises 285 residues: Release factor glutamine methyltransferase (285 aa).

Residues 124-128 (GTGSG), Asp-147, and Asn-190 contribute to the S-adenosyl-L-methionine site. 190-193 (NPPY) contributes to the substrate binding site.

The protein belongs to the protein N5-glutamine methyltransferase family. PrmC subfamily.

It carries out the reaction L-glutaminyl-[peptide chain release factor] + S-adenosyl-L-methionine = N(5)-methyl-L-glutaminyl-[peptide chain release factor] + S-adenosyl-L-homocysteine + H(+). Methylates the class 1 translation termination release factors RF1/PrfA and RF2/PrfB on the glutamine residue of the universally conserved GGQ motif. This chain is Release factor glutamine methyltransferase, found in Flavobacterium psychrophilum (strain ATCC 49511 / DSM 21280 / CIP 103535 / JIP02/86).